The following is a 417-amino-acid chain: Succinate--CoA ligase [ADP-forming] subunit beta, mitochondrial (417 aa).

The N-terminal 24 residues, 1–24, are a transit peptide targeting the mitochondrion; sequence MLRKLANQSLSVAGKWQQQQLRRL. The ATP-grasp domain maps to 32 to 275; that stretch reads AELMSKYGIN…SSQEDPREVA (244 aa). Residues Lys71, 78 to 80, and Glu138 contribute to the ATP site; that span reads GRG. Positions 230 and 244 each coordinate Mg(2+). Residues Asn295 and 352 to 354 each bind substrate; that span reads GIM.

It belongs to the succinate/malate CoA ligase beta subunit family. Heterodimer of an alpha and a beta subunit. Mg(2+) is required as a cofactor. In terms of tissue distribution, expressed in roots, stems, flowers, leaves and fruits.

The protein resides in the mitochondrion. The enzyme catalyses succinate + ATP + CoA = succinyl-CoA + ADP + phosphate. It functions in the pathway carbohydrate metabolism; tricarboxylic acid cycle; succinate from succinyl-CoA (ligase route): step 1/1. Succinyl-CoA synthetase functions in the citric acid cycle (TCA), coupling the hydrolysis of succinyl-CoA to the synthesis of ATP and thus represents the only step of substrate-level phosphorylation in the TCA. The beta subunit provides nucleotide specificity of the enzyme and binds the substrate succinate, while the binding sites for coenzyme A and phosphate are found in the alpha subunit. This is Succinate--CoA ligase [ADP-forming] subunit beta, mitochondrial from Solanum lycopersicum (Tomato).